Reading from the N-terminus, the 405-residue chain is Acetate kinase (405 aa).

Asparagine 7 provides a ligand contact to Mg(2+). Residue lysine 14 participates in ATP binding. Residue arginine 98 participates in substrate binding. Catalysis depends on aspartate 155, which acts as the Proton donor/acceptor. ATP-binding positions include 214 to 218 (HLGNG), 289 to 291 (DLR), and 337 to 341 (GVGEN). A Mg(2+)-binding site is contributed by glutamate 390.

It belongs to the acetokinase family. Homodimer. Mg(2+) serves as cofactor. The cofactor is Mn(2+).

Its subcellular location is the cytoplasm. It catalyses the reaction acetate + ATP = acetyl phosphate + ADP. It participates in metabolic intermediate biosynthesis; acetyl-CoA biosynthesis; acetyl-CoA from acetate: step 1/2. In terms of biological role, catalyzes the formation of acetyl phosphate from acetate and ATP. Can also catalyze the reverse reaction. In Gloeothece citriformis (strain PCC 7424) (Cyanothece sp. (strain PCC 7424)), this protein is Acetate kinase.